The primary structure comprises 302 residues: MNYLLGAFKPACNISITFTDGKNRKQVPTKKDNGQIVMNPLFQSQETIAGKINIEPYQGKKVEHNGVKVELLGQIEMYFDRGNFYDFTSLVREIDVPGEIYERKTYPFEFSSVEMPYETYNGVNVRLRYVLKVTVTRGYAGSIVEYQDFVVRNYVPLPPINNSIKMEVGIEDCLHIEFEYNKSKYHLKDVILGKIYFLLVRIKIKNMDLEIRRRESTGAGANTHVETETLAKFELMDGAPVRGESIPVRVFLTPYDLTPTHKNINNKFSVKYYLNLVLVDEEDRRYFKQQEITLYRLKEETS.

Belongs to the VPS26 family. As to quaternary structure, component of the retromer complex which consists of VPS29 (MAG1), VPS26 (VPS26A or VPS26B), VPS35 (VPS35A or VPS35B or VPS35C), VPS5/17 (SNX1 or SNX2A or SNX2B). Component of a retromer subcomplex consisting of VPS29 (MAG1), VPS26 (VPS26A or VPS26B), VPS35 (VPS35A or VPS35B or VPS35C).

The protein localises to the cytoplasm. It localises to the endosome membrane. It is found in the prevacuolar compartment membrane. Its subcellular location is the golgi apparatus. The protein resides in the trans-Golgi network membrane. In terms of biological role, plays a role in vesicular protein sorting. Component of the membrane-associated retromer complex which is essential in endosome-to-Golgi retrograde transport. The VPS29-VPS26-VPS35 subcomplex may be involved in recycling of specific cargos from endosome to the plasma membrane. The protein is Vacuolar protein sorting-associated protein 26A (VPS26A) of Arabidopsis thaliana (Mouse-ear cress).